Here is a 107-residue protein sequence, read N- to C-terminus: EPIDERMAL PATTERNING FACTOR-like protein 3 (107 aa).

The signal sequence occupies residues Met-1–Ala-24. 3 disulfide bridges follow: Cys-64–Cys-102, Cys-68–Cys-74, and Cys-71–Cys-104.

The protein belongs to the plant cysteine rich small secretory peptide family. Epidermal patterning factor subfamily.

The protein resides in the secreted. Functionally, controls stomatal patterning. The sequence is that of EPIDERMAL PATTERNING FACTOR-like protein 3 from Arabidopsis thaliana (Mouse-ear cress).